A 325-amino-acid polypeptide reads, in one-letter code: MKLMNKIIVPVTASALLLGACGSNATESKDNTLISSKAGDVKVADVMKKMGKEQIANTSFSIVLNKVLADKYKDKVDTKDIDKDIKKEEKQYGGKDQFESMLKQQGMSFDDYKEQKKLSAYQKQLLLDKVNVSDKEIKENSKKASHILIKVKSKSSDKEGLSDKKAKEKAEKIQKEVEKNPNKFGEIAKKESMDSSSAKKDGSLGYVIKGQMVDSFEKALFKLKEGEVSKVVKTDYGYHIIKADKETDFNSEKSNIKQKLIEEKVQKKPKLLTDAYKELLKEYKVDYKDRDIKKAIEDSILDPDKIKQQQQQQSQGGSGLTNSGS.

Positions 1–20 (MKLMNKIIVPVTASALLLGA) are cleaved as a signal peptide. A lipid anchor (N-palmitoyl cysteine) is attached at cysteine 21. Cysteine 21 is lipidated: S-diacylglycerol cysteine. Residues 139–245 (ENSKKASHIL…YGYHIIKADK (107 aa)) form the PpiC domain. 2 disordered regions span residues 159 to 202 (EGLS…KKDG) and 303 to 325 (PDKI…NSGS).

The protein belongs to the PrsA family.

It is found in the cell membrane. The catalysed reaction is [protein]-peptidylproline (omega=180) = [protein]-peptidylproline (omega=0). Plays a major role in protein secretion by helping the post-translocational extracellular folding of several secreted proteins. In Staphylococcus epidermidis (strain ATCC 12228 / FDA PCI 1200), this protein is Foldase protein PrsA.